A 612-amino-acid polypeptide reads, in one-letter code: 1,8-cineole synthase, chloroplastic (612 aa).

The transit peptide at 1–52 directs the protein to the chloroplast; it reads MALVCGAPLASRSCLNKSLISSTHELKPLRRTILPTLRWKSATPSINMCLTT. Residues Asp363, Asp367, and Asp515 each coordinate Mg(2+). The DDXXD motif motif lies at 363-367; it reads DDIYD.

Belongs to the terpene synthase family. Tpsd subfamily. Mg(2+) is required as a cofactor. Mn(2+) serves as cofactor.

It is found in the plastid. It localises to the chloroplast. The catalysed reaction is (2E)-geranyl diphosphate + H2O = 1,8-cineole + diphosphate. It participates in terpene metabolism; oleoresin biosynthesis. Functionally, terpene synthase (TPS) involved in the biosynthesis of monoterpene natural products included in conifer oleoresin secretions and volatile emissions; these compounds contribute to biotic and abiotic stress defense against herbivores and pathogens. Catalyzes the conversion of (2E)-geranyl diphosphate (GPP) to 1,8-cineole. The protein is 1,8-cineole synthase, chloroplastic of Picea glauca (White spruce).